We begin with the raw amino-acid sequence, 614 residues long: Glucosidase 2 subunit beta (614 aa).

Residues 1–20 (MGLHTLLLLLLLRISASAAA) form the signal peptide. Residue asparagine 115 is glycosylated (N-linked (GlcNAc...) asparagine). 3 stretches are compositionally biased toward basic and acidic residues: residues 194–222 (EEER…KKAS), 231–272 (QENH…HDPE), and 324–351 (TGEK…HSEE). Positions 194–396 (EEERLRKEKE…SHESDDEYVD (203 aa)) are disordered. A compositionally biased stretch (acidic residues) spans 352–364 (THEDESDVPESAE). Basic and acidic residues predominate over residues 372-382 (SEVEDDRHKYD). A compositionally biased stretch (acidic residues) spans 383–396 (DEDFSHESDDEYVD). The MRH domain maps to 497–592 (DQCFESKEGK…VLSTPALCDE (96 aa)). 3 disulfide bridges follow: cysteine 499–cysteine 512, cysteine 549–cysteine 578, and cysteine 563–cysteine 590.

In terms of assembly, heterodimer of a catalytic alpha subunit and a beta subunit.

The protein resides in the endoplasmic reticulum. It participates in glycan metabolism; N-glycan metabolism. Functionally, regulatory subunit of glucosidase II. May be required for defense response elicited by pathogen-associated molecular patterns (PAMPs). In Oryza sativa subsp. indica (Rice), this protein is Glucosidase 2 subunit beta.